The sequence spans 405 residues: Probable tRNA sulfurtransferase (405 aa).

Residues 60–165 (VPVAESLKQI…EEAAYLSYEN (106 aa)) enclose the THUMP domain. Residues 183–184 (ML), 208–209 (HF), arginine 265, glycine 287, and glutamine 296 each bind ATP.

The protein belongs to the ThiI family.

It is found in the cytoplasm. The enzyme catalyses [ThiI sulfur-carrier protein]-S-sulfanyl-L-cysteine + a uridine in tRNA + 2 reduced [2Fe-2S]-[ferredoxin] + ATP + H(+) = [ThiI sulfur-carrier protein]-L-cysteine + a 4-thiouridine in tRNA + 2 oxidized [2Fe-2S]-[ferredoxin] + AMP + diphosphate. It catalyses the reaction [ThiS sulfur-carrier protein]-C-terminal Gly-Gly-AMP + S-sulfanyl-L-cysteinyl-[cysteine desulfurase] + AH2 = [ThiS sulfur-carrier protein]-C-terminal-Gly-aminoethanethioate + L-cysteinyl-[cysteine desulfurase] + A + AMP + 2 H(+). The protein operates within cofactor biosynthesis; thiamine diphosphate biosynthesis. Its function is as follows. Catalyzes the ATP-dependent transfer of a sulfur to tRNA to produce 4-thiouridine in position 8 of tRNAs, which functions as a near-UV photosensor. Also catalyzes the transfer of sulfur to the sulfur carrier protein ThiS, forming ThiS-thiocarboxylate. This is a step in the synthesis of thiazole, in the thiamine biosynthesis pathway. The sulfur is donated as persulfide by IscS. The polypeptide is Probable tRNA sulfurtransferase (Streptococcus mutans serotype c (strain ATCC 700610 / UA159)).